The chain runs to 423 residues: F-box/LRR-repeat protein 2 (423 aa).

The F-box domain occupies 9-55 (GLINKKLPKELLLRIFSFLDIVTLCRCAQISKAWNILALDGSNWQRV). LRR repeat units follow at residues 61–87 (QTDV…SLRG), 88–113 (CIGV…NLNG), 114–139 (CTKI…DLTS), 140–165 (CVSV…NLSW), 166–191 (CDQI…LLRG), 192–217 (CTQL…NLQS), 218–243 (CSRI…CLSG), 244–269 (CSNL…EAAR), 270–295 (CSHL…DLEE), 296–321 (CVLI…SLSH), 322–350 (CELI…ELDN), 351–375 (CLLV…ELYD), and 376–401 (CQQV…AYFA). The interval 80–90 (LRKLSLRGCIG) is interaction with Calmodulin. Lysine 201 participates in a covalent cross-link: Glycyl lysine isopeptide (Lys-Gly) (interchain with G-Cter in ubiquitin). Threonine 404 bears the Phosphothreonine; by GSK3-beta mark. The S-geranylgeranyl cysteine moiety is linked to residue cysteine 420. A CAAX motif motif is present at residues 420 to 423 (CVIL).

In terms of assembly, part of the SCF (SKP1-CUL1-F-box) E3 ubiquitin-protein ligase complex SCF(FBXL2) composed of CUL1, SKP1, RBX1 and FBXL2. Interacts with calmodulin; may antagonize substrate ubiquitination by SCF(FBXL2). May interact with PIK3R1. Interacts with PTPN13. Phosphorylated by GSK-beta (GSK3B), promoting recognition by FBXO3, leading to its ubiquitination by the SCF(FBXO3) complex. In terms of processing, ubiquitinated at Lys-201 by the SCF(FBXO3) complex in response to lipopolysaccharide (LPS), leading to its degradation by the proteasome.

It localises to the membrane. It functions in the pathway protein modification; protein ubiquitination. Its function is as follows. Calcium-activated substrate recognition component of the SCF (SKP1-cullin-F-box protein) E3 ubiquitin-protein ligase complex, SCF(FBXL2), which mediates the ubiquitination and subsequent proteasomal degradation of target proteins. Unlike many F-box proteins, FBXL2 does not seem to target phosphodegron within its substrates but rather calmodulin-binding motifs and is thereby antagonized by calmodulin. This is the case for the cyclins CCND2 and CCND3 which polyubiquitination and subsequent degradation are inhibited by calmodulin. Through CCND2 and CCND3 degradation induces cell-cycle arrest in G(0). SCF(FBXL2) also mediates PIK3R2 ubiquitination and proteasomal degradation thereby regulating phosphatidylinositol 3-kinase signaling and autophagy. PCYT1A monoubiquitination by SCF(FBXL2) and subsequent degradation regulates synthesis of phosphatidylcholine, which is utilized for formation of membranes and of pulmonary surfactant. The SCF(FBXL2) complex acts as a regulator of inflammation by mediating ubiquitination and degradation of TRAF proteins (TRAF1, TRAF2, TRAF3, TRAF4, TRAF5 and TRAF6). The SCF(FBXL2) complex acts as a negative regulator of the NLRP3 inflammasome by mediating ubiquitination and degradation of NLRP3. This Mus musculus (Mouse) protein is F-box/LRR-repeat protein 2.